The following is a 380-amino-acid chain: Kappa-type opioid receptor (380 aa).

The Extracellular portion of the chain corresponds to 1–57; sequence MGRRRQGPAQPASELPARNACLLPNGSAWLPGWAEPDGNGSAGPQDEQLEPAHISPA. N-linked (GlcNAc...) asparagine glycosylation is found at asparagine 25 and asparagine 39. A helical transmembrane segment spans residues 58–85; it reads IPVIITAVYSVVFVVGLVGNSLVMFVII. Residues 86–95 lie on the Cytoplasmic side of the membrane; the sequence is RYTKMKTATN. Residues 96–119 traverse the membrane as a helical segment; that stretch reads IYIFNLALADALVTTTMPFQSTVY. Residues 120 to 132 lie on the Extracellular side of the membrane; it reads LMNSWPFGDVLCK. Cysteines 131 and 210 form a disulfide. The helical transmembrane segment at 133 to 154 threads the bilayer; the sequence is IVISIDYYNMFTSIFTLTMMSV. Residues 155 to 173 are Cytoplasmic-facing; it reads DRYIAVCHPVKALDFRTPL. A helical membrane pass occupies residues 174–196; the sequence is KAKIINICIWLLSSSVGISAIIL. Over 197–222 the chain is Extracellular; it reads GGTKVREDVDIIECSLQFPDDDYSWW. A helical membrane pass occupies residues 223-247; the sequence is DLFMKICVFVFAFVIPVLIIIVCYT. At 248–274 the chain is on the cytoplasmic side; that stretch reads LMILRLKSVRLLSGSREKDRNLRRITR. A helical transmembrane segment spans residues 275 to 296; sequence LVLVVVAVFIICWTPIHIFILV. Topologically, residues 297 to 311 are extracellular; the sequence is EALGSTSHSTAALSS. The helical transmembrane segment at 312-333 threads the bilayer; sequence YYFCIALGYTNSSLNPILYAFL. The Cytoplasmic portion of the chain corresponds to 334 to 380; that stretch reads DENFKRCFRDFCFPIKMRMERQSTSRVRNTVQDPAYMRNVDGVNKPV. A lipid anchor (S-palmitoyl cysteine) is attached at cysteine 345.

The protein belongs to the G-protein coupled receptor 1 family. As to quaternary structure, interacts with NHERF1. Interacts with GABARAPL1.

The protein localises to the cell membrane. Functionally, G-protein coupled opioid receptor that functions as a receptor for endogenous alpha-neoendorphins and dynorphins, but has low affinity for beta-endorphins. Also functions as a receptor for various synthetic opioids and for the psychoactive diterpene salvinorin A. Ligand binding causes a conformation change that triggers signaling via guanine nucleotide-binding proteins (G proteins) and modulates the activity of down-stream effectors, such as adenylate cyclase. Signaling leads to the inhibition of adenylate cyclase activity. Inhibits neurotransmitter release by reducing calcium ion currents and increasing potassium ion conductance. Plays a role in the perception of pain. Plays a role in mediating reduced physical activity upon treatment with synthetic opioids. Plays a role in the regulation of salivation in response to synthetic opioids. May play a role in arousal and regulation of autonomic and neuroendocrine functions. The protein is Kappa-type opioid receptor (OPRK1) of Cavia porcellus (Guinea pig).